The sequence spans 465 residues: MEFAAENEGKSGGGLHSVAEGVRLSPEPGREGVRDLAGAEEFGGGEEGKGLTGVKEIGDGEEGSRQRPEEIPMDLTVVKQEIIDWPGTEGRLAGQWVEQEVEDRPEVKDENAGVLEVKQETDSSLVVKEAKVGDLEVKEEVMDSSEVKEEKDNLEIKQEEKFVGQCIKEELMHGECVKEEKDFLKKEIVDDTKVKEEPPINHPVGCKRKLAMSRCETCGTEEAKYRCPRCMRYSCSLPCVKKHKAELTCNGVRDKTAYISIQQFTEMNLLSDYRFLEDVARTADHISRDAFLKRPISNKHMYFMKNRARRQGINLKLLPNGFTKRKENSTFFDKKKQQFCWHVKLQFPQSQAEYIEKRVPDDKTINEILKPYIDPEKSDPVIRQRLKAYIRSQTGVQILMKIEYMQQNLVRYYELDPYKSLLDNLRNKVIIEYPTLHVVLKGSNNDMKVLRQVKSESTKNLGNEN.

Positions 1-72 (MEFAAENEGK…GSRQRPEEIP (72 aa)) are disordered. Ser25 is subject to Phosphoserine. Residues 56-70 (EIGDGEEGSRQRPEE) show a composition bias toward basic and acidic residues. Residues Lys79, Lys108, Lys118, Lys138, Lys148, Lys157, Lys168, Lys178, and Lys195 each participate in a glycyl lysine isopeptide (Lys-Gly) (interchain with G-Cter in SUMO2) cross-link. Zn(2+)-binding residues include Cys215, Cys218, Cys227, Cys230, Cys235, Cys239, His243, and Cys249. The HIT-type zinc-finger motif lies at 215-249 (CETCGTEEAKYRCPRCMRYSCSLPCVKKHKAELTC). A Glycyl lysine isopeptide (Lys-Gly) (interchain with G-Cter in SUMO2) cross-link involves residue Lys454.

Belongs to the BCD1 family. In terms of assembly, interacts with FBL, SNU13, NOP58, NUFIP1, RUVBL1, RUVBL2 and TAF9. Interacts (via HIT-type zinc finger) with the RUVBL1/RUVBL2 complex in the presence of ADP.

In terms of biological role, required for box C/D snoRNAs accumulation involved in snoRNA processing, snoRNA transport to the nucleolus and ribosome biogenesis. The protein is Box C/D snoRNA protein 1 (ZNHIT6) of Pongo abelii (Sumatran orangutan).